The chain runs to 367 residues: Undecaprenyl-phosphate alpha-N-acetylglucosaminyl 1-phosphate transferase (367 aa).

Transmembrane regions (helical) follow at residues 3-23 (LLTVSTDLISIFLFTTLFLFF), 46-66 (LIPLVGGISVYAGICFTFGIV), 69-89 (YIPHASLYLACAGVLVFIGAL), 132-152 (VLGPFGYFLTLFAVWAAINAF), 158-178 (IDGLLGGLSCVSFAAIGMILW), 187-207 (IWCFAMIAAILPYIMLNLGIL), 213-233 (VFMGDAGSTLIGFTVIWILLE), 242-262 (ISPVTALWIIAIPLMDMVAIM), 294-314 (AFVLITLAAALLASIGVLAEY), and 318-338 (VPEWVMLVLFLLAFFLYGYCI).

This sequence belongs to the glycosyltransferase 4 family. WecA subfamily. Requires Mg(2+) as cofactor. Mn(2+) serves as cofactor.

It is found in the cell inner membrane. It carries out the reaction di-trans,octa-cis-undecaprenyl phosphate + UDP-N-acetyl-alpha-D-glucosamine = N-acetyl-alpha-D-glucosaminyl-di-trans,octa-cis-undecaprenyl diphosphate + UMP. The protein operates within bacterial outer membrane biogenesis; LPS O-antigen biosynthesis. Its pathway is bacterial outer membrane biogenesis; enterobacterial common antigen biosynthesis. Its function is as follows. Catalyzes the transfer of the GlcNAc-1-phosphate moiety from UDP-GlcNAc onto the carrier lipid undecaprenyl phosphate (C55-P), yielding GlcNAc-pyrophosphoryl-undecaprenyl (GlcNAc-PP-C55). This is Undecaprenyl-phosphate alpha-N-acetylglucosaminyl 1-phosphate transferase from Escherichia coli O6:H1 (strain CFT073 / ATCC 700928 / UPEC).